The sequence spans 538 residues: Spindle pole body protein CSA6 (538 aa).

Disordered stretches follow at residues 1 to 31 (MEDS…TSDL) and 57 to 129 (QNIS…KYQD). Basic and acidic residues-rich tracts occupy residues 18-30 (PEIK…KTSD) and 57-68 (QNISDSEHDLTP). Polar residues-rich tracts occupy residues 86–96 (KFSSSIPQKPT) and 104–122 (TSPT…SGPN). A coiled-coil region spans residues 144-237 (KQEQNLKLEN…RNERDELVKD (94 aa)). Over residues 304 to 323 (KKISEPSAAVEKDTTSEDKT) the composition is skewed to basic and acidic residues. Disordered stretches follow at residues 304–338 (KKIS…TPRM) and 355–458 (SSNN…STKY). Composition is skewed to polar residues over residues 355–392 (SSNN…SAAY) and 407–425 (TNFY…QSSQ). A compositionally biased stretch (basic and acidic residues) spans 426–444 (SDERPETFELPHVAKDHWL). Over residues 446 to 457 (RPTSERSTQSTK) the composition is skewed to polar residues.

It is found in the cytoplasm. The protein resides in the cytoskeleton. Its subcellular location is the microtubule organizing center. The protein localises to the spindle pole body. Functionally, plays a role in mitotic spindle pole body organization, possibly at the point of spindle pole body separation. Required for mitotic exit. The chain is Spindle pole body protein CSA6 from Candida albicans (strain SC5314 / ATCC MYA-2876) (Yeast).